Reading from the N-terminus, the 206-residue chain is FMN-dependent NADH:quinone oxidoreductase 2 (206 aa).

FMN-binding positions include S10, 16 to 18 (SYS), and 140 to 143 (SCGG).

This sequence belongs to the azoreductase type 1 family. Homodimer. The cofactor is FMN.

The catalysed reaction is 2 a quinone + NADH + H(+) = 2 a 1,4-benzosemiquinone + NAD(+). The enzyme catalyses N,N-dimethyl-1,4-phenylenediamine + anthranilate + 2 NAD(+) = 2-(4-dimethylaminophenyl)diazenylbenzoate + 2 NADH + 2 H(+). Quinone reductase that provides resistance to thiol-specific stress caused by electrophilic quinones. In terms of biological role, also exhibits azoreductase activity. Catalyzes the reductive cleavage of the azo bond in aromatic azo compounds to the corresponding amines. In Cupriavidus pinatubonensis (strain JMP 134 / LMG 1197) (Cupriavidus necator (strain JMP 134)), this protein is FMN-dependent NADH:quinone oxidoreductase 2.